A 616-amino-acid chain; its full sequence is UvrABC system protein C (616 aa).

The GIY-YIG domain maps to 12–91 (ESPGVYLWKD…IKEYHPRFNI (80 aa)). The region spanning 202–237 (SDVMHHVRERMLDASERLDFERAAELRDALAHLEKM) is the UVR domain.

It belongs to the UvrC family. Interacts with UvrB in an incision complex.

It localises to the cytoplasm. In terms of biological role, the UvrABC repair system catalyzes the recognition and processing of DNA lesions. UvrC both incises the 5' and 3' sides of the lesion. The N-terminal half is responsible for the 3' incision and the C-terminal half is responsible for the 5' incision. The polypeptide is UvrABC system protein C (Gemmatimonas aurantiaca (strain DSM 14586 / JCM 11422 / NBRC 100505 / T-27)).